The following is a 207-amino-acid chain: Ribosomal RNA large subunit methyltransferase E (207 aa).

S-adenosyl-L-methionine-binding residues include Gly-60, Trp-62, Asp-80, Asp-96, and Asp-121. Lys-161 functions as the Proton acceptor in the catalytic mechanism.

It belongs to the class I-like SAM-binding methyltransferase superfamily. RNA methyltransferase RlmE family.

It localises to the cytoplasm. It catalyses the reaction uridine(2552) in 23S rRNA + S-adenosyl-L-methionine = 2'-O-methyluridine(2552) in 23S rRNA + S-adenosyl-L-homocysteine + H(+). Its function is as follows. Specifically methylates the uridine in position 2552 of 23S rRNA at the 2'-O position of the ribose in the fully assembled 50S ribosomal subunit. The sequence is that of Ribosomal RNA large subunit methyltransferase E from Thioalkalivibrio sulfidiphilus (strain HL-EbGR7).